The following is a 958-amino-acid chain: Eukaryotic translation initiation factor 3 subunit A (958 aa).

The stretch at 93-123 (MHLATERAELARNQAQALEEALDVEDLEADK) forms a coiled coil. One can recognise a PCI domain in the interval 316-513 (LQLIASSVVL…GLSSLVNRVL (198 aa)). 2 coiled-coil regions span residues 548 to 696 (EALS…AKRE) and 796 to 861 (LRSE…LRKS). Basic and acidic residues predominate over residues 804 to 859 (KRLQEEEEARKREEAERRKKEEAERQAKLDEIAEKQRRRMLELEEKEKREREEILR). Positions 804–958 (KRLQEEEEAR…SRTSWPASRR (155 aa)) are disordered. Residues 877–894 (PAELGGAAPIPAAAATAP) are compositionally biased toward low complexity. A compositionally biased stretch (basic and acidic residues) spans 929 to 942 (KPDDRPSWRDERKP). Residues 946-958 (GSGSRTSWPASRR) show a composition bias toward polar residues.

Belongs to the eIF-3 subunit A family. Component of the eukaryotic translation initiation factor 3 (eIF-3) complex.

The protein localises to the cytoplasm. Functionally, RNA-binding component of the eukaryotic translation initiation factor 3 (eIF-3) complex, which is involved in protein synthesis of a specialized repertoire of mRNAs and, together with other initiation factors, stimulates binding of mRNA and methionyl-tRNAi to the 40S ribosome. The eIF-3 complex specifically targets and initiates translation of a subset of mRNAs involved in cell proliferation. This Nicotiana tabacum (Common tobacco) protein is Eukaryotic translation initiation factor 3 subunit A (TIF3A1).